Consider the following 130-residue polypeptide: uncharacterized protein (130 aa).

A disordered region spans residues 1 to 62 (MRMYSSDAHE…ASGVGSSCKR (62 aa)). Pro residues predominate over residues 21–30 (PPHPLPPTGS).

This is an uncharacterized protein from Homo sapiens (Human).